A 464-amino-acid chain; its full sequence is Glucose-6-phosphate isomerase (464 aa).

Glu-290 (proton donor) is an active-site residue. Residues His-319 and Lys-433 contribute to the active site.

The protein belongs to the GPI family.

The protein resides in the cytoplasm. The enzyme catalyses alpha-D-glucose 6-phosphate = beta-D-fructose 6-phosphate. Its pathway is carbohydrate biosynthesis; gluconeogenesis. It participates in carbohydrate degradation; glycolysis; D-glyceraldehyde 3-phosphate and glycerone phosphate from D-glucose: step 2/4. In terms of biological role, catalyzes the reversible isomerization of glucose-6-phosphate to fructose-6-phosphate. The sequence is that of Glucose-6-phosphate isomerase from Carboxydothermus hydrogenoformans (strain ATCC BAA-161 / DSM 6008 / Z-2901).